The following is an 898-amino-acid chain: Alanine--tRNA ligase (898 aa).

Positions 582, 586, 685, and 689 each coordinate Zn(2+).

The protein belongs to the class-II aminoacyl-tRNA synthetase family. Zn(2+) is required as a cofactor.

Its subcellular location is the cytoplasm. The enzyme catalyses tRNA(Ala) + L-alanine + ATP = L-alanyl-tRNA(Ala) + AMP + diphosphate. In terms of biological role, catalyzes the attachment of alanine to tRNA(Ala) in a two-step reaction: alanine is first activated by ATP to form Ala-AMP and then transferred to the acceptor end of tRNA(Ala). Also edits incorrectly charged Ser-tRNA(Ala) and Gly-tRNA(Ala) via its editing domain. In Mycolicibacterium vanbaalenii (strain DSM 7251 / JCM 13017 / BCRC 16820 / KCTC 9966 / NRRL B-24157 / PYR-1) (Mycobacterium vanbaalenii), this protein is Alanine--tRNA ligase.